The following is a 182-amino-acid chain: UPF0316 protein BCG9842_B1857 (182 aa).

3 helical membrane passes run 6–26 (LIFV…ILLV), 32–52 (SAAG…GIVF), and 58–78 (WMNI…GGYI).

The protein belongs to the UPF0316 family.

The protein localises to the cell membrane. This is UPF0316 protein BCG9842_B1857 from Bacillus cereus (strain G9842).